Here is a 202-residue protein sequence, read N- to C-terminus: ATP-dependent Clp protease proteolytic subunit (202 aa).

Serine 106 acts as the Nucleophile in catalysis. The active site involves histidine 131.

The protein belongs to the peptidase S14 family. As to quaternary structure, fourteen ClpP subunits assemble into 2 heptameric rings which stack back to back to give a disk-like structure with a central cavity, resembling the structure of eukaryotic proteasomes.

The protein resides in the cytoplasm. The enzyme catalyses Hydrolysis of proteins to small peptides in the presence of ATP and magnesium. alpha-casein is the usual test substrate. In the absence of ATP, only oligopeptides shorter than five residues are hydrolyzed (such as succinyl-Leu-Tyr-|-NHMec, and Leu-Tyr-Leu-|-Tyr-Trp, in which cleavage of the -Tyr-|-Leu- and -Tyr-|-Trp bonds also occurs).. Its function is as follows. Cleaves peptides in various proteins in a process that requires ATP hydrolysis. Has a chymotrypsin-like activity. Plays a major role in the degradation of misfolded proteins. The chain is ATP-dependent Clp protease proteolytic subunit from Acidovorax ebreus (strain TPSY) (Diaphorobacter sp. (strain TPSY)).